A 396-amino-acid chain; its full sequence is Phosphoglycerate kinase (396 aa).

Substrate is bound by residues 21–23 (DFN), Arg-36, 59–62 (HFDR), Arg-118, and Arg-151. Residues Lys-201, Glu-323, and 353 to 356 (GGDT) contribute to the ATP site.

Belongs to the phosphoglycerate kinase family. Monomer.

It localises to the cytoplasm. It catalyses the reaction (2R)-3-phosphoglycerate + ATP = (2R)-3-phospho-glyceroyl phosphate + ADP. The protein operates within carbohydrate degradation; glycolysis; pyruvate from D-glyceraldehyde 3-phosphate: step 2/5. The protein is Phosphoglycerate kinase of Caulobacter vibrioides (strain ATCC 19089 / CIP 103742 / CB 15) (Caulobacter crescentus).